A 153-amino-acid polypeptide reads, in one-letter code: Endoribonuclease YbeY (153 aa).

3 residues coordinate Zn(2+): His113, His117, and His123.

It belongs to the endoribonuclease YbeY family. Zn(2+) serves as cofactor.

Its subcellular location is the cytoplasm. In terms of biological role, single strand-specific metallo-endoribonuclease involved in late-stage 70S ribosome quality control and in maturation of the 3' terminus of the 16S rRNA. This is Endoribonuclease YbeY from Aliivibrio fischeri (strain MJ11) (Vibrio fischeri).